A 1272-amino-acid chain; its full sequence is Vitamin B12-dependent ribonucleotide reductase (1272 aa).

Residues S153, 198–199, G230, 474–478, and 675–679 contribute to the substrate site; these read AC, NPCSE, and PTGTI. The cysteines at positions 199 and 487 are disulfide-linked. N474 acts as the Proton acceptor in catalysis. The active-site Cysteine radical intermediate is C476. The Proton acceptor role is filled by E478. Residues 1120 to 1147 form a disordered region; that stretch reads TLVSSNEGDRAASEPKGSATAAPARGSA.

It belongs to the ribonucleoside diphosphate reductase class-2 family. Requires adenosylcob(III)alamin as cofactor.

The enzyme catalyses a 2'-deoxyribonucleoside 5'-diphosphate + [thioredoxin]-disulfide + H2O = a ribonucleoside 5'-diphosphate + [thioredoxin]-dithiol. Functionally, catalyzes the reduction of ribonucleotides to deoxyribonucleotides. May function to provide a pool of deoxyribonucleotide precursors for DNA repair during oxygen limitation and/or for immediate growth after restoration of oxygen. This Agrobacterium fabrum (strain C58 / ATCC 33970) (Agrobacterium tumefaciens (strain C58)) protein is Vitamin B12-dependent ribonucleotide reductase (nrdJ).